Here is a 304-residue protein sequence, read N- to C-terminus: Mitochondrial glycine transporter (304 aa).

3 Solcar repeats span residues 25 to 114 (HPVI…LKQY), 121 to 205 (PTAL…TKNI), and 215 to 299 (LIPI…MMAK). The next 6 membrane-spanning stretches (helical) occupy residues 31–56 (FLCG…TRLQ), 89–115 (GMSP…KQYF), 127–152 (VMLG…TRYE), 180–203 (GLTA…NQTK), 219–245 (TNFS…KTHM), and 274–292 (GGIP…AWTV).

This sequence belongs to the mitochondrial carrier (TC 2.A.29) family. SLC25A38 subfamily. Preferentially expressed in erythroid cells.

Its subcellular location is the mitochondrion inner membrane. The enzyme catalyses glycine(in) = glycine(out). Mitochondrial glycine transporter that imports glycine into the mitochondrial matrix. Plays an important role in providing glycine for the first enzymatic step in heme biosynthesis, the condensation of glycine with succinyl-CoA to produce 5-aminolevulinate (ALA) in the mitochondrial matrix. Required during erythropoiesis. Functionally, plays a role as pro-apoptotic protein that induces caspase-dependent apoptosis. This chain is Mitochondrial glycine transporter, found in Homo sapiens (Human).